Consider the following 216-residue polypeptide: Ribosomal RNA large subunit methyltransferase E (216 aa).

S-adenosyl-L-methionine is bound by residues Gly67, Trp69, Asp87, Asp103, and Asp128. The active-site Proton acceptor is the Lys168.

The protein belongs to the class I-like SAM-binding methyltransferase superfamily. RNA methyltransferase RlmE family.

Its subcellular location is the cytoplasm. The enzyme catalyses uridine(2552) in 23S rRNA + S-adenosyl-L-methionine = 2'-O-methyluridine(2552) in 23S rRNA + S-adenosyl-L-homocysteine + H(+). In terms of biological role, specifically methylates the uridine in position 2552 of 23S rRNA at the 2'-O position of the ribose in the fully assembled 50S ribosomal subunit. This is Ribosomal RNA large subunit methyltransferase E from Acinetobacter baylyi (strain ATCC 33305 / BD413 / ADP1).